Consider the following 398-residue polypeptide: Acetate kinase (398 aa).

A Mg(2+)-binding site is contributed by Asn-9. Lys-16 contacts ATP. A substrate-binding site is contributed by Arg-90. The active-site Proton donor/acceptor is the Asp-147. Residues 207–211 (HIGNG), 282–284 (DLR), and 330–334 (GVGEN) each bind ATP. Mg(2+) is bound at residue Glu-384.

The protein belongs to the acetokinase family. Homodimer. Mg(2+) is required as a cofactor. Requires Mn(2+) as cofactor.

The protein resides in the cytoplasm. The enzyme catalyses acetate + ATP = acetyl phosphate + ADP. The protein operates within metabolic intermediate biosynthesis; acetyl-CoA biosynthesis; acetyl-CoA from acetate: step 1/2. Its function is as follows. Catalyzes the formation of acetyl phosphate from acetate and ATP. Can also catalyze the reverse reaction. The polypeptide is Acetate kinase (Staphylococcus haemolyticus (strain JCSC1435)).